Reading from the N-terminus, the 214-residue chain is Pyrophosphatase PpaX (214 aa).

Aspartate 9 functions as the Nucleophile in the catalytic mechanism.

It belongs to the HAD-like hydrolase superfamily. PpaX family. Mg(2+) serves as cofactor.

The catalysed reaction is diphosphate + H2O = 2 phosphate + H(+). Hydrolyzes pyrophosphate formed during P-Ser-HPr dephosphorylation by HPrK/P. Might play a role in controlling the intracellular pyrophosphate pool. The polypeptide is Pyrophosphatase PpaX (Oceanobacillus iheyensis (strain DSM 14371 / CIP 107618 / JCM 11309 / KCTC 3954 / HTE831)).